The chain runs to 639 residues: Threonine--tRNA ligase (639 aa).

Positions 1–61 (MIKVALKDGS…DTDCDLNLFK (61 aa)) constitute a TGS domain. Residues 242 to 532 (DHRKLGKELG…LIEHYAGKFP (291 aa)) form a catalytic region. Zn(2+)-binding residues include Cys333, His384, and His509.

It belongs to the class-II aminoacyl-tRNA synthetase family. In terms of assembly, homodimer. Requires Zn(2+) as cofactor.

The protein resides in the cytoplasm. The catalysed reaction is tRNA(Thr) + L-threonine + ATP = L-threonyl-tRNA(Thr) + AMP + diphosphate + H(+). Catalyzes the attachment of threonine to tRNA(Thr) in a two-step reaction: L-threonine is first activated by ATP to form Thr-AMP and then transferred to the acceptor end of tRNA(Thr). Also edits incorrectly charged L-seryl-tRNA(Thr). This Clostridioides difficile (strain 630) (Peptoclostridium difficile) protein is Threonine--tRNA ligase.